The primary structure comprises 199 residues: MKTFIIGISGVTNSGKTTLAKNLQKHLPNCSVISQDDFFKPESEIETDKNGFLQYDVLEALNMEKMMSAISCWMESARHSVVSTDQESAEEIPILIIEGFLLFNYKPLDTIWNRSYFLTIPYEECKRRRSTRVYQPPDSPGYFDGHVWPMYLKYRQEMQDITWEVVYLDGTKSEEDLFLQVYEDLIQELAKQKCLQVTA.

10–18 (GVTNSGKTT) is a binding site for ATP. Mg(2+) is bound by residues threonine 17 and aspartate 36. Catalysis depends on aspartate 36, which acts as the Proton acceptor. Residues 36–39 (DDFF) and 55–56 (YD) contribute to the substrate site. Arginine 128 contacts ATP. Substrate-binding positions include arginine 129 and 134-135 (YQ). ATP-binding positions include 132-134 (RVY) and 172-174 (KSE).

This sequence belongs to the uridine kinase family. NRK subfamily. In terms of assembly, monomer.

The catalysed reaction is beta-nicotinamide D-riboside + ATP = beta-nicotinamide D-ribonucleotide + ADP + H(+). It catalyses the reaction beta-D-ribosylnicotinate + ATP = nicotinate beta-D-ribonucleotide + ADP + H(+). It functions in the pathway cofactor biosynthesis; NAD(+) biosynthesis. Catalyzes the phosphorylation of nicotinamide riboside (NR) and nicotinic acid riboside (NaR) to form nicotinamide mononucleotide (NMN) and nicotinic acid mononucleotide (NaMN). The enzyme also phosphorylates the antitumor drugs tiazofurin and 3-deazaguanosine. The protein is Nicotinamide riboside kinase 1 (NMRK1) of Homo sapiens (Human).